The chain runs to 201 residues: 2-phospho-L-lactate guanylyltransferase (201 aa).

This sequence belongs to the CofC family. As to quaternary structure, homodimer.

It carries out the reaction (2S)-2-phospholactate + GTP + H(+) = (2S)-lactyl-2-diphospho-5'-guanosine + diphosphate. It participates in cofactor biosynthesis; coenzyme F420 biosynthesis. Functionally, guanylyltransferase that catalyzes the activation of (2S)-2-phospholactate (2-PL) as (2S)-lactyl-2-diphospho-5'-guanosine, via the condensation of 2-PL with GTP. It is involved in the biosynthesis of coenzyme F420, a hydride carrier cofactor. In Natronomonas pharaonis (strain ATCC 35678 / DSM 2160 / CIP 103997 / JCM 8858 / NBRC 14720 / NCIMB 2260 / Gabara) (Halobacterium pharaonis), this protein is 2-phospho-L-lactate guanylyltransferase.